Here is an 863-residue protein sequence, read N- to C-terminus: Paramyosin (863 aa).

A nonhelical region region spans residues 1-18 (MSESHVKISRTIIRGTSP). Residues 19–836 (STVRLESRVR…ERTITIKRTI (818 aa)) adopt a coiled-coil conformation. Residues 837–863 (GGPGSRAVSVVREINSVSRGNRATSIM) are nonhelical region.

This sequence belongs to the paramyosin family. In terms of assembly, homodimer.

The protein localises to the cytoplasm. It localises to the myofibril. Its function is as follows. Paramyosin is a major structural component of many thick filaments isolated from invertebrate muscles. This is Paramyosin (PMY) from Taenia saginata (Beef tapeworm).